A 167-amino-acid chain; its full sequence is NADH-quinone oxidoreductase subunit B (167 aa).

[4Fe-4S] cluster-binding residues include Cys40, Cys41, Cys105, and Cys134.

It belongs to the complex I 20 kDa subunit family. NDH-1 is composed of 14 different subunits. Subunits NuoB, C, D, E, F, and G constitute the peripheral sector of the complex. It depends on [4Fe-4S] cluster as a cofactor.

The protein localises to the cell inner membrane. It carries out the reaction a quinone + NADH + 5 H(+)(in) = a quinol + NAD(+) + 4 H(+)(out). In terms of biological role, NDH-1 shuttles electrons from NADH, via FMN and iron-sulfur (Fe-S) centers, to quinones in the respiratory chain. The immediate electron acceptor for the enzyme in this species is believed to be ubiquinone. Couples the redox reaction to proton translocation (for every two electrons transferred, four hydrogen ions are translocated across the cytoplasmic membrane), and thus conserves the redox energy in a proton gradient. The polypeptide is NADH-quinone oxidoreductase subunit B (Campylobacter jejuni subsp. jejuni serotype O:6 (strain 81116 / NCTC 11828)).